The primary structure comprises 168 residues: Protein DESIGUAL 2 (168 aa).

An N-terminal signal peptide occupies residues 1–20 (MARNVGFFICILILAMDVSA). Transmembrane regions (helical) follow at residues 56-76 (LAAC…GGCL), 94-114 (AVAS…MLIV), and 133-153 (VLSI…AYYI).

Belongs to the DESIGUAL family. Mainly expressed in roots, inflorescences and developing leaves, and, at low levels, in mature leaves.

Its subcellular location is the endoplasmic reticulum membrane. Functionally, involved, partially redundantly with VCC/DEAL1 and DEAL3, to ensure bilateral symmetry development and early leaf margin patterning, probably via the regulation of auxin and CUC2 distribution. The sequence is that of Protein DESIGUAL 2 from Arabidopsis thaliana (Mouse-ear cress).